The following is a 486-amino-acid chain: ATP synthase subunit beta (486 aa).

An ATP-binding site is contributed by 164–171 (GGAGVGKT).

Belongs to the ATPase alpha/beta chains family. F-type ATPases have 2 components, CF(1) - the catalytic core - and CF(0) - the membrane proton channel. CF(1) has five subunits: alpha(3), beta(3), gamma(1), delta(1), epsilon(1). CF(0) has four main subunits: a(1), b(1), b'(1) and c(9-12).

The protein resides in the cellular thylakoid membrane. The enzyme catalyses ATP + H2O + 4 H(+)(in) = ADP + phosphate + 5 H(+)(out). In terms of biological role, produces ATP from ADP in the presence of a proton gradient across the membrane. The catalytic sites are hosted primarily by the beta subunits. This Prochlorococcus marinus (strain MIT 9312) protein is ATP synthase subunit beta.